Reading from the N-terminus, the 288-residue chain is Structure-specific endonuclease subunit SLX1 (288 aa).

The GIY-YIG domain maps to 7-90; the sequence is PFYGVYLLQS…QHPNMTRLIT (84 aa).

It belongs to the SLX1 family. In terms of assembly, forms a heterodimer with SLX4. It depends on a divalent metal cation as a cofactor.

The protein localises to the nucleus. Functionally, catalytic subunit of the SLX1-SLX4 structure-specific endonuclease that resolves DNA secondary structures generated during DNA repair and recombination. Has endonuclease activity towards branched DNA substrates, introducing single-strand cuts in duplex DNA close to junctions with ss-DNA. The chain is Structure-specific endonuclease subunit SLX1 from Yarrowia lipolytica (strain CLIB 122 / E 150) (Yeast).